Consider the following 916-residue polypeptide: Protein translocase subunit SecA (916 aa).

ATP is bound by residues Gln87, 105 to 109 (GEGKT), and Asp507. Zn(2+)-binding residues include Cys900, Cys902, Cys911, and His912.

It belongs to the SecA family. Monomer and homodimer. Part of the essential Sec protein translocation apparatus which comprises SecA, SecYEG and auxiliary proteins SecDF-YajC and YidC. It depends on Zn(2+) as a cofactor.

It localises to the cell inner membrane. It is found in the cytoplasm. The catalysed reaction is ATP + H2O + cellular proteinSide 1 = ADP + phosphate + cellular proteinSide 2.. Part of the Sec protein translocase complex. Interacts with the SecYEG preprotein conducting channel. Has a central role in coupling the hydrolysis of ATP to the transfer of proteins into and across the cell membrane, serving both as a receptor for the preprotein-SecB complex and as an ATP-driven molecular motor driving the stepwise translocation of polypeptide chains across the membrane. The protein is Protein translocase subunit SecA of Neisseria meningitidis serogroup A / serotype 4A (strain DSM 15465 / Z2491).